Consider the following 75-residue polypeptide: U6-lycotoxin-Ls1h (75 aa).

The first 21 residues, 1–21 (MKLLLFTALVLVVISLIEVEA), serve as a signal peptide directing secretion. Residues 22 to 25 (ENER) constitute a propeptide that is removed on maturation.

Belongs to the neurotoxin 19 (CSTX) family. 06 (U6-Lctx) subfamily. Contains 4 disulfide bonds. As to expression, expressed by the venom gland.

The protein localises to the secreted. The polypeptide is U6-lycotoxin-Ls1h (Lycosa singoriensis (Wolf spider)).